Consider the following 132-residue polypeptide: Minor structural pilin EpdB (132 aa).

Residues 1-4 constitute a propeptide that is removed on maturation; sequence MSKG. The QXSXEXXXL motif lies at 9-19; that stretch reads EFIVLFLALLV.

In terms of processing, the N-terminus is probably cleaved by the prepilin peptidase EppA, which recognizes the class III signal sequence.

It localises to the secreted. The protein localises to the cell surface. The protein resides in the fimbrium. Its function is as follows. Minor component of the type IV-like pili. Essential for pili formation. This is Minor structural pilin EpdB from Methanococcus maripaludis (strain DSM 14266 / JCM 13030 / NBRC 101832 / S2 / LL).